We begin with the raw amino-acid sequence, 121 residues long: MSITKDQIIEAVAAMSVMDVVELISAMEEKFGVSAAAAVAVAAGPVEAAEEKTEFDVILKAAGANKVAVIKAVRGATGLGLKEAKDLVESAPAALKEGVSKDDAEALKKALEEAGAEVEVK.

The protein belongs to the bacterial ribosomal protein bL12 family. Homodimer. Part of the ribosomal stalk of the 50S ribosomal subunit. Forms a multimeric L10(L12)X complex, where L10 forms an elongated spine to which 2 to 4 L12 dimers bind in a sequential fashion. Binds GTP-bound translation factors.

In terms of biological role, forms part of the ribosomal stalk which helps the ribosome interact with GTP-bound translation factors. Is thus essential for accurate translation. The protein is Large ribosomal subunit protein bL12 of Escherichia coli O45:K1 (strain S88 / ExPEC).